A 258-amino-acid chain; its full sequence is Acetylglutamate kinase (258 aa).

Residues G44–G45, R66, and N158 contribute to the substrate site. ATP is bound by residues D181–L186 and I209–T211.

This sequence belongs to the acetylglutamate kinase family. ArgB subfamily. In terms of assembly, homodimer.

Its subcellular location is the cytoplasm. It carries out the reaction N-acetyl-L-glutamate + ATP = N-acetyl-L-glutamyl 5-phosphate + ADP. The protein operates within amino-acid biosynthesis; L-arginine biosynthesis; N(2)-acetyl-L-ornithine from L-glutamate: step 2/4. Its function is as follows. Catalyzes the ATP-dependent phosphorylation of N-acetyl-L-glutamate. The polypeptide is Acetylglutamate kinase (Shigella dysenteriae serotype 1 (strain Sd197)).